The sequence spans 245 residues: tRNA (guanine-N(1)-)-methyltransferase (245 aa).

Residues G112 and 132-137 contribute to the S-adenosyl-L-methionine site; that span reads IGDFVL.

It belongs to the RNA methyltransferase TrmD family. As to quaternary structure, homodimer.

It is found in the cytoplasm. The catalysed reaction is guanosine(37) in tRNA + S-adenosyl-L-methionine = N(1)-methylguanosine(37) in tRNA + S-adenosyl-L-homocysteine + H(+). In terms of biological role, specifically methylates guanosine-37 in various tRNAs. The chain is tRNA (guanine-N(1)-)-methyltransferase from Geobacter metallireducens (strain ATCC 53774 / DSM 7210 / GS-15).